Here is a 102-residue protein sequence, read N- to C-terminus: Small ribosomal subunit protein uS10 (102 aa).

Belongs to the universal ribosomal protein uS10 family. As to quaternary structure, part of the 30S ribosomal subunit.

Involved in the binding of tRNA to the ribosomes. This is Small ribosomal subunit protein uS10 from Salinispora tropica (strain ATCC BAA-916 / DSM 44818 / JCM 13857 / NBRC 105044 / CNB-440).